A 222-amino-acid polypeptide reads, in one-letter code: Peroxiredoxin (222 aa).

Residues 7–163 (PRLGEPAPAF…VIRLVDALQT (157 aa)) enclose the Thioredoxin domain. The Cysteine sulfenic acid (-SOH) intermediate role is filled by Cys49. Arg126 is a substrate binding site. An intrachain disulfide couples Cys212 to Cys218.

It belongs to the peroxiredoxin family. Prx6 subfamily. Homodecamer. Pentamer of dimers that assemble into a ring structure.

The protein localises to the cytoplasm. It catalyses the reaction a hydroperoxide + [thioredoxin]-dithiol = an alcohol + [thioredoxin]-disulfide + H2O. Its function is as follows. Thiol-specific peroxidase that catalyzes the reduction of hydrogen peroxide and organic hydroperoxides to water and alcohols, respectively. Plays a role in cell protection against oxidative stress by detoxifying peroxides. The polypeptide is Peroxiredoxin (Aquifex aeolicus (strain VF5)).